A 138-amino-acid polypeptide reads, in one-letter code: Nucleoside diphosphate kinase (138 aa).

6 residues coordinate ATP: Lys-9, Phe-57, Arg-85, Thr-91, Arg-102, and Asn-112. Catalysis depends on His-115, which acts as the Pros-phosphohistidine intermediate.

Belongs to the NDK family. In terms of assembly, homotetramer. Mg(2+) is required as a cofactor.

The protein localises to the cytoplasm. The enzyme catalyses a 2'-deoxyribonucleoside 5'-diphosphate + ATP = a 2'-deoxyribonucleoside 5'-triphosphate + ADP. It carries out the reaction a ribonucleoside 5'-diphosphate + ATP = a ribonucleoside 5'-triphosphate + ADP. Major role in the synthesis of nucleoside triphosphates other than ATP. The ATP gamma phosphate is transferred to the NDP beta phosphate via a ping-pong mechanism, using a phosphorylated active-site intermediate. This chain is Nucleoside diphosphate kinase, found in Deinococcus deserti (strain DSM 17065 / CIP 109153 / LMG 22923 / VCD115).